Here is a 226-residue protein sequence, read N- to C-terminus: MSADDQKRISGEAAAELVEAGMVVGLGTGSTAAWFVKALAARKLDIRGVPTSEATANLARELGIALTALDDVKSIDLTVDGADEIGPGLSLIKGGGAALLREKLVWEASKRCVVIADAAKHVKTLGKFPLPIEVVRFGHVHTGQRLADIAAEFDLLPPRLRMADRGVVVTDGGNVIYDMPSGVIAEPAALAAALKTVTGVVDHGLFLDLADEALLGTDQGVVKLVP.

Substrate-binding positions include 28-31 (TGST), 80-83 (DGAD), and 93-96 (KGGG). Glu-102 functions as the Proton acceptor in the catalytic mechanism. Substrate is bound at residue Lys-120.

The protein belongs to the ribose 5-phosphate isomerase family. Homodimer.

The catalysed reaction is aldehydo-D-ribose 5-phosphate = D-ribulose 5-phosphate. It functions in the pathway carbohydrate degradation; pentose phosphate pathway; D-ribose 5-phosphate from D-ribulose 5-phosphate (non-oxidative stage): step 1/1. Its function is as follows. Catalyzes the reversible conversion of ribose-5-phosphate to ribulose 5-phosphate. The polypeptide is Ribose-5-phosphate isomerase A (Caulobacter sp. (strain K31)).